The sequence spans 952 residues: Lysosomal alpha-glucosidase (952 aa).

The N-terminal stretch at 1–27 is a signal peptide; the sequence is MGVRHPPCSHRLLAVCALVSLATAALL. Positions 28–69 are excised as a propeptide; it reads GHILLHDFLLVPRELSGSSPVLEETHPAHQQGASRPGPRDAQ. The tract at residues 47-82 is disordered; sequence PVLEETHPAHQQGASRPGPRDAQAHPGRPRAVPTQC. Residues 80–131 form the P-type domain; that stretch reads TQCDVPPNSRFDCAPDKAITQEQCEARGCCYIPAKQGLQGAQMGQPWCFFPP. Disulfide bonds link C82–C109, C92–C108, and C103–C127. N-linked (GlcNAc...) asparagine glycosylation is found at N140, N233, and N390. D404 provides a ligand contact to substrate. N470 carries N-linked (GlcNAc...) asparagine glycosylation. D518 functions as the Nucleophile in the catalytic mechanism. E521 is a catalytic residue. An intrachain disulfide couples C533 to C558. 2 residues coordinate substrate: R600 and D616. Residues C647 and C658 are joined by a disulfide bond. A glycan (N-linked (GlcNAc...) asparagine) is linked at N652. H674 contributes to the substrate binding site. N-linked (GlcNAc...) asparagine glycosylation is found at N882 and N925.

This sequence belongs to the glycosyl hydrolase 31 family. The different forms of acid glucosidase are obtained by proteolytic processing. Post-translationally, phosphorylation of mannose residues ensures efficient transport of the enzyme to the lysosomes via the mannose 6-phosphate receptor.

It is found in the lysosome. The protein resides in the lysosome membrane. It carries out the reaction Hydrolysis of terminal, non-reducing (1-&gt;4)-linked alpha-D-glucose residues with release of alpha-D-glucose.. Essential for the degradation of glycogen in lysosomes. Has highest activity on alpha-1,4-linked glycosidic linkages, but can also hydrolyze alpha-1,6-linked glucans. The polypeptide is Lysosomal alpha-glucosidase (GAA) (Homo sapiens (Human)).